Here is a 329-residue protein sequence, read N- to C-terminus: Malate dehydrogenase (329 aa).

12 to 18 (GAAGQIG) contributes to the NAD(+) binding site. Residues R95 and R101 each contribute to the substrate site. Residues N108, Q115, and 132–134 (VGN) each bind NAD(+). N134 and R165 together coordinate substrate. The Proton acceptor role is filled by H190.

Belongs to the LDH/MDH superfamily. MDH type 2 family.

The catalysed reaction is (S)-malate + NAD(+) = oxaloacetate + NADH + H(+). Its function is as follows. Catalyzes the reversible oxidation of malate to oxaloacetate. The sequence is that of Malate dehydrogenase from Bordetella avium (strain 197N).